The primary structure comprises 659 residues: A-type ATP synthase subunit I (659 aa).

8 helical membrane-spanning segments follow: residues 376 to 396 (FFFG…IISA), 415 to 435 (IMLW…SYCG), 460 to 480 (MIAL…GFIV), 489 to 509 (GAIF…LFAL), 518 to 538 (LIVK…EVLA), 542 to 562 (MAVL…LSYA), 568 to 588 (ALAT…IWGI), and 590 to 610 (IASV…GHIF).

It belongs to the V-ATPase 116 kDa subunit family. Has multiple subunits with at least A(3), B(3), C, D, E, F, H, I and proteolipid K(x).

The protein localises to the cell membrane. In terms of biological role, component of the A-type ATP synthase that produces ATP from ADP in the presence of a proton gradient across the membrane. The polypeptide is A-type ATP synthase subunit I (Pyrococcus horikoshii (strain ATCC 700860 / DSM 12428 / JCM 9974 / NBRC 100139 / OT-3)).